The sequence spans 729 residues: Bromo and FHA domain-containing protein DDB_G0267958 (729 aa).

The segment covering 46–79 has biased composition (low complexity); sequence LPIPNTSNTNPPMNQSSSPTTTTTTPTTTTTPTT. The segment at 46–83 is disordered; that stretch reads LPIPNTSNTNPPMNQSSSPTTTTTTPTTTTTPTTAEPA. Residues 112 to 167 enclose the FHA domain; it reads LIIGSDTELADIQVVRPGIYPKHVEIIYDKEKKKFYLNPLIDPKDSDNVRLNFVPF. Composition is skewed to low complexity over residues 208–221, 229–275, and 283–306; these read IPSNTPTCITNTPI, PPSS…ATKT, and PTKTTTTTTVTTSKPTVKPTAVKK. 2 disordered regions span residues 208 to 361 and 403 to 442; these read IPSN…MSCK and SRRPTAPVTPTKPTSTKKVTTPKKATVVKPPKESKVPKVP. A compositionally biased stretch (acidic residues) spans 310–341; it reads DDDYGDDYNEEEDDDDEEEEEEEEEEEEEEEV. A coiled-coil region spans residues 315–352; sequence DDYNEEEDDDDEEEEEEEEEEEEEEEVESKQIKVVNSK. Residues 406 to 431 show a composition bias toward low complexity; that stretch reads PTAPVTPTKPTSTKKVTTPKKATVVK. Positions 498 to 617 constitute a Bromo domain; sequence SNEKKEILKC…IELYKALSNS (120 aa). A coiled-coil region spans residues 659-718; it reads SKNKEQTVPQEEDEEEEEEEEEEEEEEEEGEEGKEDEEEEEKEEEEGEENEEEEDVEIDD. The segment at 659 to 729 is disordered; it reads SKNKEQTVPQ…EIDQESDDDQ (71 aa). Over residues 668-729 the composition is skewed to acidic residues; that stretch reads QEEDEEEEEE…EIDQESDDDQ (62 aa).

This is Bromo and FHA domain-containing protein DDB_G0267958 from Dictyostelium discoideum (Social amoeba).